The primary structure comprises 262 residues: Phosphatidylglycerol--prolipoprotein diacylglyceryl transferase (262 aa).

The next 4 helical transmembrane spans lie at Leu-9–Val-29, Ile-41–Ala-61, Ile-80–Val-100, and Leu-109–Leu-129. Residue Arg-131 participates in a 1,2-diacyl-sn-glycero-3-phospho-(1'-sn-glycerol) binding. Helical transmembrane passes span Gln-167 to Phe-187, Gly-197 to Met-217, and Gly-226 to Ile-246.

It belongs to the Lgt family.

It is found in the cell membrane. It carries out the reaction L-cysteinyl-[prolipoprotein] + a 1,2-diacyl-sn-glycero-3-phospho-(1'-sn-glycerol) = an S-1,2-diacyl-sn-glyceryl-L-cysteinyl-[prolipoprotein] + sn-glycerol 1-phosphate + H(+). The protein operates within protein modification; lipoprotein biosynthesis (diacylglyceryl transfer). Catalyzes the transfer of the diacylglyceryl group from phosphatidylglycerol to the sulfhydryl group of the N-terminal cysteine of a prolipoprotein, the first step in the formation of mature lipoproteins. In Streptococcus pneumoniae serotype 4 (strain ATCC BAA-334 / TIGR4), this protein is Phosphatidylglycerol--prolipoprotein diacylglyceryl transferase.